A 601-amino-acid chain; its full sequence is Elongation factor 4 (601 aa).

The tr-type G domain occupies 5 to 187; sequence EHIRNFSIIA…AIVERLPAPE (183 aa). GTP-binding positions include 17 to 22 and 134 to 137; these read DHGKST and NKVD.

This sequence belongs to the TRAFAC class translation factor GTPase superfamily. Classic translation factor GTPase family. LepA subfamily.

The protein localises to the cell inner membrane. It carries out the reaction GTP + H2O = GDP + phosphate + H(+). In terms of biological role, required for accurate and efficient protein synthesis under certain stress conditions. May act as a fidelity factor of the translation reaction, by catalyzing a one-codon backward translocation of tRNAs on improperly translocated ribosomes. Back-translocation proceeds from a post-translocation (POST) complex to a pre-translocation (PRE) complex, thus giving elongation factor G a second chance to translocate the tRNAs correctly. Binds to ribosomes in a GTP-dependent manner. The sequence is that of Elongation factor 4 from Nitratidesulfovibrio vulgaris (strain DSM 19637 / Miyazaki F) (Desulfovibrio vulgaris).